The sequence spans 572 residues: NADP-dependent malic enzyme (572 aa).

M1 is modified (N-acetylmethionine). Y102 (proton donor) is an active-site residue. Position 155 (R155) interacts with NADP(+). K173 acts as the Proton acceptor in catalysis. The a divalent metal cation site is built by E245, D246, and D269. NADP(+)-binding positions include D269 and 301–318; that span reads GAGE…MAME. S336 carries the phosphoserine modification.

Belongs to the malic enzymes family. As to quaternary structure, homotetramer. The cofactor is Mg(2+). It depends on Mn(2+) as a cofactor.

The protein localises to the cytoplasm. The catalysed reaction is (S)-malate + NADP(+) = pyruvate + CO2 + NADPH. The enzyme catalyses oxaloacetate + H(+) = pyruvate + CO2. Functionally, catalyzes the oxidative decarboxylation of (S)-malate in the presence of NADP(+) and divalent metal ions, and decarboxylation of oxaloacetate. The protein is NADP-dependent malic enzyme (Me1) of Mus musculus (Mouse).